We begin with the raw amino-acid sequence, 125 residues long: Protein ApaG (125 aa).

An ApaG domain is found at 3–125; that stretch reads TAVTEGIEVT…FPLVVPGTLN (123 aa).

In Anaeromyxobacter sp. (strain K), this protein is Protein ApaG.